The primary structure comprises 151 residues: HTH-type transcriptional regulator FL11 (151 aa).

The region spanning 5–66 is the HTH asnC-type domain; it reads LDDIDKKIIE…VVNPEALGYN (62 aa). The H-T-H motif DNA-binding region spans 24–43; sequence LREISKITGLAESTIHERIK. 98–104 is a binding site for L-arginine; the sequence is ETTGDYD. L-lysine is bound by residues asparagine 118, aspartate 122, and 133 to 135; that span reads THT. Residues aspartate 122 and 133-135 each bind L-arginine; that span reads THT.

As to quaternary structure, homodimer. Binds DNA as a dimer and an octamer.

Its activity is regulated as follows. In the famine mode, FL11 forms dimers and acts as a repressor, leading to growth arrest. In the feast mode, in the presence of high concentrations of lysine or arginine, four dimers assemble into an octamer and cover the fl11 and lysine biosynthesis promoters. This leads to the inhibition of fl11 expression and lysine biosynthesis, decrease of the FL11 concentration in the cell, derepression of the target genes and activation of the metabolism. In terms of biological role, DNA-binding protein involved in the repression of transcription of a large number of genes, thereby arresting growth, in response to environmental changes. This is HTH-type transcriptional regulator FL11 from Pyrococcus furiosus (strain ATCC 43587 / DSM 3638 / JCM 8422 / Vc1).